Consider the following 308-residue polypeptide: Glycine--tRNA ligase alpha subunit (308 aa).

The protein belongs to the class-II aminoacyl-tRNA synthetase family. Tetramer of two alpha and two beta subunits.

Its subcellular location is the cytoplasm. It carries out the reaction tRNA(Gly) + glycine + ATP = glycyl-tRNA(Gly) + AMP + diphosphate. The protein is Glycine--tRNA ligase alpha subunit of Brevibacillus brevis (strain 47 / JCM 6285 / NBRC 100599).